A 218-amino-acid polypeptide reads, in one-letter code: Probable carboxylesterase clz11 (218 aa).

Positions 7 to 9 (LVG) match the Involved in the stabilization of the negatively charged intermediate by the formation of the oxyanion hole motif. Ser-77 is an active-site residue.

Belongs to the 'GDXG' lipolytic enzyme family.

The catalysed reaction is a carboxylic ester + H2O = an alcohol + a carboxylate + H(+). It functions in the pathway secondary metabolite biosynthesis. Functionally, probable carboxylesterase; part of the gene cluster that mediates the biosynthesis of squalestatin S1 (SQS1, also known as zaragozic acid A), a heavily oxidized fungal polyketide that offers potent cholesterol lowering activity by targeting squalene synthase (SS). SQS1 is composed of a 2,8-dioxobicyclic[3.2.1]octane-3,4,5-tricarboxyclic acid core that is connected to two lipophilic polyketide arms. These initial steps feature the priming of an unusual benzoic acid starter unit onto the highly reducing polyketide synthase clz14, followed by oxaloacetate extension and product release to generate a tricarboxylic acid containing product. The phenylalanine ammonia lyase (PAL) clz10 and the acyl-CoA ligase clz12 are involved in transforming phenylalanine into benzoyl-CoA. The citrate synthase-like protein clz17 is involved in connecting the C-alpha-carbons of the hexaketide chain and oxaloacetate to afford the tricarboxylic acid unit. The potential hydrolytic enzymes, clz11 and clz13, are in close proximity to pks2 and may participate in product release. On the other side, the tetraketide arm is synthesized by a the squalestatin tetraketide synthase clz2 and enzymatically esterified to the core in the last biosynthetic step, by the acetyltransferase clz6. The biosynthesis of the tetraketide must involve 3 rounds of chain extension. After the first and second rounds methyl-transfer occurs, and in all rounds of extension the ketoreductase and dehydratase are active. The enoyl reductase and C-MeT of clz2 are not active in the final round of extension. The acetyltransferase clz6 appears to have a broad substrate selectivity for its acyl CoA substrate, allowing the in vitro synthesis of novel squalestatins. The biosynthesis of SQS1 requires several oxidative steps likely performed by oxidoreductases clz3, clz15 and clz16. Finally, in support of the identification of the cluster as being responsible for SQS1 production, the cluster contains a gene encoding a putative squalene synthase (SS) clz20, suggesting a likely mechanism for self-resistance. The sequence is that of Probable carboxylesterase clz11 from Cochliobolus lunatus (Filamentous fungus).